A 69-amino-acid polypeptide reads, in one-letter code: DNA gyrase inhibitor YacG (69 aa).

Zn(2+) is bound by residues Cys7, Cys10, Cys26, and Cys30.

This sequence belongs to the DNA gyrase inhibitor YacG family. In terms of assembly, interacts with GyrB. Requires Zn(2+) as cofactor.

Functionally, inhibits all the catalytic activities of DNA gyrase by preventing its interaction with DNA. Acts by binding directly to the C-terminal domain of GyrB, which probably disrupts DNA binding by the gyrase. The chain is DNA gyrase inhibitor YacG from Shewanella putrefaciens (strain CN-32 / ATCC BAA-453).